Consider the following 180-residue polypeptide: UPF0134 protein MPN_368 (180 aa).

The protein belongs to the UPF0134 family.

The protein is UPF0134 protein MPN_368 of Mycoplasma pneumoniae (strain ATCC 29342 / M129 / Subtype 1) (Mycoplasmoides pneumoniae).